The primary structure comprises 384 residues: Ribosomal RNA large subunit methyltransferase G (384 aa).

The protein belongs to the methyltransferase superfamily. RlmG family.

The protein localises to the cytoplasm. The catalysed reaction is guanosine(1835) in 23S rRNA + S-adenosyl-L-methionine = N(2)-methylguanosine(1835) in 23S rRNA + S-adenosyl-L-homocysteine + H(+). In terms of biological role, specifically methylates the guanine in position 1835 (m2G1835) of 23S rRNA. In Pseudoalteromonas atlantica (strain T6c / ATCC BAA-1087), this protein is Ribosomal RNA large subunit methyltransferase G.